Consider the following 162-residue polypeptide: Corticoliberin (162 aa).

An N-terminal signal peptide occupies residues 1–24 (MKLNFLVTTVALLVAFPPPYECRA). The propeptide occupies 25 to 119 (IEGSSNQPAT…ALDSVERERR (95 aa)). A Phenylalanine amide modification is found at Phe-160.

The protein belongs to the sauvagine/corticotropin-releasing factor/urotensin I family.

The protein resides in the secreted. Its function is as follows. This hormone from hypothalamus regulates the release of corticotropin from pituitary gland. The polypeptide is Corticoliberin (crh) (Carassius auratus (Goldfish)).